Consider the following 329-residue polypeptide: Diaminopimelate epimerase (329 aa).

Substrate is bound by residues N14 and N73. The active-site Proton donor is the C82. Substrate-binding positions include 83 to 84 (GN), N170, N206, and 224 to 225 (ER). Residue C233 is the Proton acceptor of the active site. 234-235 (GT) lines the substrate pocket.

This sequence belongs to the diaminopimelate epimerase family. As to quaternary structure, homodimer.

The protein localises to the cytoplasm. It carries out the reaction (2S,6S)-2,6-diaminopimelate = meso-2,6-diaminopimelate. Its pathway is amino-acid biosynthesis; L-lysine biosynthesis via DAP pathway; DL-2,6-diaminopimelate from LL-2,6-diaminopimelate: step 1/1. Catalyzes the stereoinversion of LL-2,6-diaminopimelate (L,L-DAP) to meso-diaminopimelate (meso-DAP), a precursor of L-lysine and an essential component of the bacterial peptidoglycan. This chain is Diaminopimelate epimerase, found in Listeria monocytogenes serotype 4b (strain CLIP80459).